The sequence spans 173 residues: Shikimate kinase (173 aa).

14–19 (GAGKST) contributes to the ATP binding site. S18 contacts Mg(2+). Substrate-binding residues include D36, R60, and G82. Position 120 (R120) interacts with ATP. R140 contributes to the substrate binding site. Q157 serves as a coordination point for ATP.

The protein belongs to the shikimate kinase family. As to quaternary structure, monomer. It depends on Mg(2+) as a cofactor.

The protein resides in the cytoplasm. It catalyses the reaction shikimate + ATP = 3-phosphoshikimate + ADP + H(+). It participates in metabolic intermediate biosynthesis; chorismate biosynthesis; chorismate from D-erythrose 4-phosphate and phosphoenolpyruvate: step 5/7. In terms of biological role, catalyzes the specific phosphorylation of the 3-hydroxyl group of shikimic acid using ATP as a cosubstrate. This Baumannia cicadellinicola subsp. Homalodisca coagulata protein is Shikimate kinase.